The chain runs to 368 residues: o-succinylbenzoate synthase (368 aa).

The Proton donor role is filled by lysine 183. Residues aspartate 213, glutamate 239, and aspartate 264 each coordinate Mg(2+). The Proton acceptor role is filled by lysine 290.

This sequence belongs to the mandelate racemase/muconate lactonizing enzyme family. MenC type 1 subfamily. As to quaternary structure, monomer. A divalent metal cation serves as cofactor.

The enzyme catalyses (1R,6R)-6-hydroxy-2-succinyl-cyclohexa-2,4-diene-1-carboxylate = 2-succinylbenzoate + H2O. It participates in quinol/quinone metabolism; 1,4-dihydroxy-2-naphthoate biosynthesis; 1,4-dihydroxy-2-naphthoate from chorismate: step 4/7. It functions in the pathway cofactor biosynthesis; phylloquinone biosynthesis. Its function is as follows. Converts 2-succinyl-6-hydroxy-2,4-cyclohexadiene-1-carboxylate (SHCHC) to 2-succinylbenzoate (OSB). Does not show N-succinylamino acid racemase (NSAR) activity with N-succinyl-L-phenylglycine as substrate. This Desulfotalea psychrophila (strain LSv54 / DSM 12343) protein is o-succinylbenzoate synthase.